Here is a 274-residue protein sequence, read N- to C-terminus: Penicillin-insensitive murein endopeptidase (274 aa).

The N-terminal stretch at 1–19 (MNKTAIALLALLASSASLA) is a signal peptide. Cystine bridges form between C44–C265, C187–C235, and C216–C223. H110, H113, D120, D147, H150, and H211 together coordinate Zn(2+). The segment at 227–274 (PLPPPGDGCGAELQSWFEPPKPGTTKPEKKTPPPLPPSCQALLDEHVI) is disordered.

It belongs to the peptidase M74 family. In terms of assembly, dimer. It depends on Zn(2+) as a cofactor.

The protein resides in the periplasm. Its function is as follows. Murein endopeptidase that cleaves the D-alanyl-meso-2,6-diamino-pimelyl amide bond that connects peptidoglycan strands. Likely plays a role in the removal of murein from the sacculus. The protein is Penicillin-insensitive murein endopeptidase of Escherichia coli (strain SE11).